The following is a 634-amino-acid chain: Chaperone protein DnaK (634 aa).

Threonine 198 is modified (phosphothreonine; by autocatalysis). The segment at 599–634 (KQTQEGAEAASEAGEQSAGDEGVVDAEFEEVDEQNK) is disordered. Residues 602-619 (QEGAEAASEAGEQSAGDE) are compositionally biased toward low complexity. The segment covering 620 to 634 (GVVDAEFEEVDEQNK) has biased composition (acidic residues).

Belongs to the heat shock protein 70 family.

Its function is as follows. Acts as a chaperone. The chain is Chaperone protein DnaK from Syntrophotalea carbinolica (strain DSM 2380 / NBRC 103641 / GraBd1) (Pelobacter carbinolicus).